Reading from the N-terminus, the 438-residue chain is Coenzyme A disulfide reductase (438 aa).

Residue 8–33 (GAVAGGATCASQIRRLDKESDIIIFE) coordinates FAD. The substrate site is built by threonine 15, glutamine 19, arginine 22, serine 39, and asparagine 42. The Nucleophile role is filled by cysteine 43. The active-site Redox-active is cysteine 43. Lysine 71 serves as a coordination point for substrate. 151–166 (VLVVGAGYVSLEVLEN) is an NADP(+) binding site. 267–277 (TNVPNIYAIGD) serves as a coordination point for FAD. Position 299 (histidine 299) interacts with substrate. Tyrosine 419 contributes to the FAD binding site. Lysine 427 contacts substrate.

The protein belongs to the class-III pyridine nucleotide-disulfide oxidoreductase family. As to quaternary structure, homodimer. Requires FAD as cofactor.

The enzyme catalyses NADP(+) + 2 CoA = CoA-disulfide + NADPH + H(+). Functionally, catalyzes specifically the NADPH-dependent reduction of coenzyme A disulfide. Is also active with other disulfide substrates containing at least one 4'-phosphopantethienyl moiety such as 4,4'-diphosphopantethine, but is not able to reduce oxidized glutathione, cystine, pantethine, or H(2)O(2). The chain is Coenzyme A disulfide reductase (cdr) from Staphylococcus aureus (strain NCTC 8325 / PS 47).